A 594-amino-acid chain; its full sequence is Glutamate decarboxylase 1 (594 aa).

A compositionally biased stretch (low complexity) spans 1–13 (MASSTPSSSATSS). The tract at residues 1–23 (MASSTPSSSATSSNAGADPNTTN) is disordered. A Phosphoserine modification is found at Ser78. Residue 190 to 192 (QLS) participates in 4-aminobutanoate binding. Residue Lys405 is modified to N6-(pyridoxal phosphate)lysine. 4-aminobutanoate is bound at residue Arg567.

It belongs to the group II decarboxylase family. Homodimer. Requires pyridoxal 5'-phosphate as cofactor.

It catalyses the reaction L-glutamate + H(+) = 4-aminobutanoate + CO2. Catalyzes the synthesis of the inhibitory neurotransmitter gamma-aminobutyric acid (GABA) with pyridoxal 5'-phosphate as cofactor. This Pan troglodytes (Chimpanzee) protein is Glutamate decarboxylase 1 (GAD1).